Reading from the N-terminus, the 906-residue chain is Catenin alpha-1 (906 aa).

Thr2 carries the N-acetylthreonine modification. Residues 2 to 228 (TAVHAGNINF…PILYTASQAC (227 aa)) form an involved in homodimerization region. Lys57 participates in a covalent cross-link: Glycyl lysine isopeptide (Lys-Gly) (interchain with G-Cter in SUMO2). The tract at residues 97-148 (VRKQGDLMKSAAGEFADDPCSSVKRGNMVRAARALLSAVTRLLILADMADVY) is interaction with JUP and CTNNB1. Ser264, Ser295, and Ser297 each carry phosphoserine. The interval 325 to 394 (TRDDRRERIV…AVMDHVSDSF (70 aa)) is interaction with alpha-actinin. Residue Thr634 is modified to Phosphothreonine. Ser641 bears the Phosphoserine mark. A Phosphothreonine modification is found at Thr645. Residues Ser652 and Ser655 each carry the phosphoserine modification. Thr658 is subject to Phosphothreonine. A Glycyl lysine isopeptide (Lys-Gly) (interchain with G-Cter in SUMO2) cross-link involves residue Lys797. At Ser851 the chain carries Phosphoserine. A compositionally biased stretch (basic and acidic residues) spans 864-880 (PEKKPLVKREKQDETQT). The interval 864–894 (PEKKPLVKREKQDETQTKIKRASQKKHVNPV) is disordered. A compositionally biased stretch (basic residues) spans 881–891 (KIKRASQKKHV).

Belongs to the vinculin/alpha-catenin family. As to quaternary structure, monomer and homodimer; the monomer preferentially binds to CTNNB1 and the homodimer to actin. Component of an cadherin:catenin adhesion complex composed of at least of CDH26, beta-catenin/CTNNB1, alpha-catenin/CTNNA1 and p120 catenin/CTNND1. Possible component of an E-cadherin/ catenin adhesion complex together with E-cadherin/CDH1 and beta-catenin/CTNNB1 or gamma-catenin/JUP; the complex is located to adherens junctions. The stable association of CTNNA1 is controversial as CTNNA1 was shown not to bind to F-actin when assembled in the complex. Alternatively, the CTNNA1-containing complex may be linked to F-actin by other proteins such as LIMA1. Binds AFDN and F-actin. Interacts with LIMA1. Interacts with ARHGAP21. Interacts with AJUBA. Interacts with vinculin/VCL. Interacts with TJP2/ZO2 (via N-terminus). Interacts with TJP1/ZO1 (via N-terminus). In terms of processing, sumoylated. Phosphorylation seems to contribute to the strength of cell-cell adhesion rather than to the basic capacity for cell-cell adhesion. In terms of tissue distribution, expressed in cerebellum, heart, liver, small intestine, kidney and placenta (at protein level).

Its subcellular location is the cytoplasm. It localises to the cytoskeleton. The protein localises to the cell junction. The protein resides in the adherens junction. It is found in the cell membrane. Its subcellular location is the nucleus. Functionally, associates with the cytoplasmic domain of a variety of cadherins. The association of catenins to cadherins produces a complex which is linked to the actin filament network, and which seems to be of primary importance for cadherins cell-adhesion properties. Can associate with both E- and N-cadherins. Originally believed to be a stable component of E-cadherin/catenin adhesion complexes and to mediate the linkage of cadherins to the actin cytoskeleton at adherens junctions. In contrast, cortical actin was found to be much more dynamic than E-cadherin/catenin complexes and CTNNA1 was shown not to bind to F-actin when assembled in the complex suggesting a different linkage between actin and adherens junctions components. The homodimeric form may regulate actin filament assembly and inhibit actin branching by competing with the Arp2/3 complex for binding to actin filaments. Involved in the regulation of WWTR1/TAZ, YAP1 and TGFB1-dependent SMAD2 and SMAD3 nuclear accumulation. May play a crucial role in cell differentiation. This Mus musculus (Mouse) protein is Catenin alpha-1.